A 372-amino-acid polypeptide reads, in one-letter code: METQEGVSKQSIRERIWDYMESHDIADFPRPVHHRIPNFKGAAQAAGHLPHLQAFHVARTIKVNPDAPQRNARFLVLESKKTLLVPTPRLRTGLFNKITPPPGATKDILRKCATSQGVRNFSVPVGLDSSVLVDLVVVGSVAVSEKGWRIGKGEGYADLEYAMMVSMGAVHKGTPVVTIVHDCQVVDIPEALVEDHDLTVDYILTPTRVITTGCARPKPTGIMWSKVSCEMLTKIPVLRNLREREKQAGKDVTLRDEPGSQQPAPGPIRRPQDRPQTGSRGGSRSPLQGADTQLAATVCVGNLPFTTRVRELKRVLQELGVVPLRLTWQGPQHRAVLHYTDSAAAQQAASLLQGLRLGANALRVSLGQQRDM.

Residues 246-258 are compositionally biased toward basic and acidic residues; the sequence is KQAGKDVTLRDEP. Residues 246-289 form a disordered region; it reads KQAGKDVTLRDEPGSQQPAPGPIRRPQDRPQTGSRGGSRSPLQG. The region spanning 296-369 is the RRM domain; the sequence is ATVCVGNLPF…NALRVSLGQQ (74 aa).

This chain is Methenyltetrahydrofolate synthase domain-containing protein (Mthfsd), found in Mus musculus (Mouse).